The sequence spans 328 residues: MTDILDELDAGRAPLAPTLADLRGDWARAEPSAHLQRLESESIHILREVAAEFAKPVMLYSIGKDSSVLLHLAMKAFAPGKPPFPLLHVDTTWKFREMIEFRDQRMRELGLDLIVHINPDGVAQGIGPFSHGSALHTDVMKTQGLRQALEAHGFDAAIGGARRDEEKSRAKERIFSHRSAAHRWDPKNQRPELWSLYNTLLAPGESMRVFPLSNWTERDVWDYILVEQIPIVPLYFAALRPVVERDGALIMVDDARMPLRPGEVPQLRSVRFRTLGCYPLTGAMPSTATTLEQIVDEMLASRSSERQGRVIDRDSTGSMERKKAEGYF.

The segment at Glu-305–Phe-328 is disordered.

The protein belongs to the PAPS reductase family. CysD subfamily. Heterodimer composed of CysD, the smaller subunit, and CysN.

The enzyme catalyses sulfate + ATP + H(+) = adenosine 5'-phosphosulfate + diphosphate. It participates in sulfur metabolism; hydrogen sulfide biosynthesis; sulfite from sulfate: step 1/3. Its function is as follows. With CysN forms the ATP sulfurylase (ATPS) that catalyzes the adenylation of sulfate producing adenosine 5'-phosphosulfate (APS) and diphosphate, the first enzymatic step in sulfur assimilation pathway. APS synthesis involves the formation of a high-energy phosphoric-sulfuric acid anhydride bond driven by GTP hydrolysis by CysN coupled to ATP hydrolysis by CysD. This chain is Sulfate adenylyltransferase subunit 2, found in Rhodopseudomonas palustris (strain BisB18).